The following is a 138-amino-acid chain: Protein PsiE homolog (138 aa).

Helical transmembrane passes span 14 to 34 (LQAL…GLLI), 56 to 76 (YEML…ALII), 84 to 104 (HFPL…LIII), and 109 to 129 (AIST…FFIV).

This sequence belongs to the PsiE family.

Its subcellular location is the cell membrane. This chain is Protein PsiE homolog, found in Bacillus velezensis (strain DSM 23117 / BGSC 10A6 / LMG 26770 / FZB42) (Bacillus amyloliquefaciens subsp. plantarum).